The sequence spans 409 residues: DNA polymerase IV 2 (409 aa).

Residues 5–190 form the UmuC domain; the sequence is IFMVDMESFF…LPIECLYGVG (186 aa). 2 residues coordinate Mg(2+): Asp-9 and Asp-105. Glu-106 is a catalytic residue.

This sequence belongs to the DNA polymerase type-Y family. As to quaternary structure, monomer. It depends on Mg(2+) as a cofactor.

The protein localises to the cytoplasm. It carries out the reaction DNA(n) + a 2'-deoxyribonucleoside 5'-triphosphate = DNA(n+1) + diphosphate. Its function is as follows. Poorly processive, error-prone DNA polymerase involved in untargeted mutagenesis. Copies undamaged DNA at stalled replication forks, which arise in vivo from mismatched or misaligned primer ends. These misaligned primers can be extended by PolIV. Exhibits no 3'-5' exonuclease (proofreading) activity. May be involved in translesional synthesis, in conjunction with the beta clamp from PolIII. This is DNA polymerase IV 2 (dinB2) from Halalkalibacterium halodurans (strain ATCC BAA-125 / DSM 18197 / FERM 7344 / JCM 9153 / C-125) (Bacillus halodurans).